The following is a 733-amino-acid chain: mRNA 3'-end-processing protein rna14 (733 aa).

Positions 1 to 45 (MNSDDNVEADASSNIIKDSPKIKEQENTSTVNESDVLATSTTASS) are disordered. Residues 27–45 (NTSTVNESDVLATSTTASS) show a composition bias toward polar residues. 6 HAT repeats span residues 85-117 (GKHEELRETYEQMLRPFPYVPRVWVDYISSELA), 119-150 (NDFHAVELLFSRCLVKVLSVDLWTLYLSYIRR), 158-193 (QSRSTITQAYEFVINTIGVDILSGPIWSEFVDFLRS), 204-237 (QKLDHVRRIYQRAITTPIHNIEKLWRDYDAFENS), 269-302 (EGLRVYDFTFERKYTKVERIAYSRWMNWIKWEQS), and 312-344 (MLQNRIAYAFEQAMLYVPLCPQIWLDGFSYFLS). Residues 404–414 (DSKASSSSESS) show a composition bias toward low complexity. The segment at 404–425 (DSKASSSSESSTDGNPQEKKLP) is disordered. One copy of the HAT 7 repeat lies at 523 to 557 (NDETNARALFEKAIPRIAADEAKPIYQKWLDYESN).

Its subcellular location is the nucleus. It is found in the cytoplasm. Its function is as follows. Component of the cleavage factor IA (CFIA) complex, which is involved in the endonucleolytic cleavage during polyadenylation-dependent pre-mRNA 3'-end formation. This Schizosaccharomyces pombe (strain 972 / ATCC 24843) (Fission yeast) protein is mRNA 3'-end-processing protein rna14 (rna14).